The following is a 253-amino-acid chain: 5'-nucleotidase SurE (253 aa).

A divalent metal cation contacts are provided by aspartate 8, aspartate 9, serine 39, and asparagine 95.

This sequence belongs to the SurE nucleotidase family. The cofactor is a divalent metal cation.

The protein localises to the cytoplasm. It carries out the reaction a ribonucleoside 5'-phosphate + H2O = a ribonucleoside + phosphate. Nucleotidase that shows phosphatase activity on nucleoside 5'-monophosphates. The protein is 5'-nucleotidase SurE of Kosmotoga olearia (strain ATCC BAA-1733 / DSM 21960 / TBF 19.5.1).